Reading from the N-terminus, the 86-residue chain is MELSADYLREKLRQDLEAEHVEVEDTTLNRCATSFRVLVVSAKFEGKPLLQRHRLVNECLAEELPHIHAFEQKTLTPEQWTRQRRE.

An N-acetylmethionine modification is found at Met-1.

It belongs to the BolA/IbaG family. Interacts with GLRX3; forms a heterotrimeric complex composed by two BOLA2 molecules and one GLRX3 molecule; linked by [2Fe-2S] clusters.

It is found in the cytoplasm. Its subcellular location is the nucleus. In terms of biological role, acts as a cytosolic iron-sulfur (Fe-S) cluster assembly factor that facilitates [2Fe-2S] cluster insertion into a subset of cytosolic proteins. Acts together with the monothiol glutaredoxin GLRX3. The sequence is that of BolA-like protein 2 (Bola2) from Mus musculus (Mouse).